Here is a 564-residue protein sequence, read N- to C-terminus: Proline--tRNA ligase (564 aa).

The protein belongs to the class-II aminoacyl-tRNA synthetase family. ProS type 1 subfamily. As to quaternary structure, homodimer.

It is found in the cytoplasm. It carries out the reaction tRNA(Pro) + L-proline + ATP = L-prolyl-tRNA(Pro) + AMP + diphosphate. Catalyzes the attachment of proline to tRNA(Pro) in a two-step reaction: proline is first activated by ATP to form Pro-AMP and then transferred to the acceptor end of tRNA(Pro). As ProRS can inadvertently accommodate and process non-cognate amino acids such as alanine and cysteine, to avoid such errors it has two additional distinct editing activities against alanine. One activity is designated as 'pretransfer' editing and involves the tRNA(Pro)-independent hydrolysis of activated Ala-AMP. The other activity is designated 'posttransfer' editing and involves deacylation of mischarged Ala-tRNA(Pro). The misacylated Cys-tRNA(Pro) is not edited by ProRS. In Xylella fastidiosa (strain 9a5c), this protein is Proline--tRNA ligase.